The sequence spans 575 residues: 2-isopropylmalate synthase (575 aa).

The Pyruvate carboxyltransferase domain occupies Pro-40–Asp-314. Mg(2+) is bound by residues Asp-49, His-253, His-255, and Asn-289. Residues Ser-456–Arg-575 form a regulatory domain region.

It belongs to the alpha-IPM synthase/homocitrate synthase family. LeuA type 2 subfamily. As to quaternary structure, homodimer. Mg(2+) serves as cofactor.

The protein localises to the cytoplasm. The enzyme catalyses 3-methyl-2-oxobutanoate + acetyl-CoA + H2O = (2S)-2-isopropylmalate + CoA + H(+). It functions in the pathway amino-acid biosynthesis; L-leucine biosynthesis; L-leucine from 3-methyl-2-oxobutanoate: step 1/4. In terms of biological role, catalyzes the condensation of the acetyl group of acetyl-CoA with 3-methyl-2-oxobutanoate (2-ketoisovalerate) to form 3-carboxy-3-hydroxy-4-methylpentanoate (2-isopropylmalate). This is 2-isopropylmalate synthase from Kineococcus radiotolerans (strain ATCC BAA-149 / DSM 14245 / SRS30216).